The sequence spans 366 residues: Ribosomal RNA large subunit methyltransferase M (366 aa).

S-adenosyl-L-methionine is bound by residues Ser-188, 221 to 224 (CPGG), Asp-240, Asp-260, and Asp-277. Residue Lys-306 is the Proton acceptor of the active site.

The protein belongs to the class I-like SAM-binding methyltransferase superfamily. RNA methyltransferase RlmE family. RlmM subfamily. In terms of assembly, monomer.

The protein localises to the cytoplasm. The catalysed reaction is cytidine(2498) in 23S rRNA + S-adenosyl-L-methionine = 2'-O-methylcytidine(2498) in 23S rRNA + S-adenosyl-L-homocysteine + H(+). In terms of biological role, catalyzes the 2'-O-methylation at nucleotide C2498 in 23S rRNA. This Klebsiella pneumoniae subsp. pneumoniae (strain ATCC 700721 / MGH 78578) protein is Ribosomal RNA large subunit methyltransferase M.